The following is an 85-amino-acid chain: ATP synthase subunit c (85 aa).

2 consecutive transmembrane segments (helical) span residues 10-30 (IAVA…FAVL) and 53-73 (FIIA…ALLF).

Belongs to the ATPase C chain family. In terms of assembly, F-type ATPases have 2 components, F(1) - the catalytic core - and F(0) - the membrane proton channel. F(1) has five subunits: alpha(3), beta(3), gamma(1), delta(1), epsilon(1). F(0) has three main subunits: a(1), b(2) and c(10-14). The alpha and beta chains form an alternating ring which encloses part of the gamma chain. F(1) is attached to F(0) by a central stalk formed by the gamma and epsilon chains, while a peripheral stalk is formed by the delta and b chains.

It localises to the cell inner membrane. Functionally, f(1)F(0) ATP synthase produces ATP from ADP in the presence of a proton or sodium gradient. F-type ATPases consist of two structural domains, F(1) containing the extramembraneous catalytic core and F(0) containing the membrane proton channel, linked together by a central stalk and a peripheral stalk. During catalysis, ATP synthesis in the catalytic domain of F(1) is coupled via a rotary mechanism of the central stalk subunits to proton translocation. In terms of biological role, key component of the F(0) channel; it plays a direct role in translocation across the membrane. A homomeric c-ring of between 10-14 subunits forms the central stalk rotor element with the F(1) delta and epsilon subunits. This is ATP synthase subunit c from Vibrio vulnificus (strain CMCP6).